Here is a 421-residue protein sequence, read N- to C-terminus: Histidine--tRNA ligase (421 aa).

It belongs to the class-II aminoacyl-tRNA synthetase family. In terms of assembly, homodimer.

It localises to the cytoplasm. The enzyme catalyses tRNA(His) + L-histidine + ATP = L-histidyl-tRNA(His) + AMP + diphosphate + H(+). The sequence is that of Histidine--tRNA ligase from Francisella tularensis subsp. holarctica (strain LVS).